We begin with the raw amino-acid sequence, 444 residues long: Phosphoglucosamine mutase (444 aa).

S101 serves as the catalytic Phosphoserine intermediate. Residues S101, D239, D241, and D243 each contribute to the Mg(2+) site. S101 carries the phosphoserine modification.

This sequence belongs to the phosphohexose mutase family. It depends on Mg(2+) as a cofactor. Post-translationally, activated by phosphorylation.

It catalyses the reaction alpha-D-glucosamine 1-phosphate = D-glucosamine 6-phosphate. Its function is as follows. Catalyzes the conversion of glucosamine-6-phosphate to glucosamine-1-phosphate. This is Phosphoglucosamine mutase from Alcanivorax borkumensis (strain ATCC 700651 / DSM 11573 / NCIMB 13689 / SK2).